Reading from the N-terminus, the 171-residue chain is Lipoprotein signal peptidase (171 aa).

3 consecutive transmembrane segments (helical) span residues 8–28 (SFLWLSAVAFVIDLLTKYIVV), 64–84 (WQQYFFILLALAISGMLVYFL), and 99–119 (ALIIGGALANMVDRAYNGFVV). Residues aspartate 120 and aspartate 138 contribute to the active site. A helical transmembrane segment spans residues 133-153 (VFNIADIAICIGAGLLVLDAF).

This sequence belongs to the peptidase A8 family.

The protein resides in the cell inner membrane. The catalysed reaction is Release of signal peptides from bacterial membrane prolipoproteins. Hydrolyzes -Xaa-Yaa-Zaa-|-(S,diacylglyceryl)Cys-, in which Xaa is hydrophobic (preferably Leu), and Yaa (Ala or Ser) and Zaa (Gly or Ala) have small, neutral side chains.. Its pathway is protein modification; lipoprotein biosynthesis (signal peptide cleavage). Its function is as follows. This protein specifically catalyzes the removal of signal peptides from prolipoproteins. In Haemophilus influenzae (strain ATCC 51907 / DSM 11121 / KW20 / Rd), this protein is Lipoprotein signal peptidase.